Consider the following 97-residue polypeptide: Small ribosomal subunit protein bS6 (97 aa).

It belongs to the bacterial ribosomal protein bS6 family.

Its function is as follows. Binds together with bS18 to 16S ribosomal RNA. This chain is Small ribosomal subunit protein bS6, found in Limosilactobacillus fermentum (strain NBRC 3956 / LMG 18251) (Lactobacillus fermentum).